A 277-amino-acid chain; its full sequence is tRNA U34 carboxymethyltransferase (277 aa).

Residues Lys46, Trp60, Lys65, Gly84, 106–108 (DPS), 133–134 (VE), Tyr153, and Arg268 each bind carboxy-S-adenosyl-L-methionine.

The protein belongs to the class I-like SAM-binding methyltransferase superfamily. CmoB family. In terms of assembly, homotetramer.

It carries out the reaction carboxy-S-adenosyl-L-methionine + 5-hydroxyuridine(34) in tRNA = 5-carboxymethoxyuridine(34) in tRNA + S-adenosyl-L-homocysteine + H(+). Functionally, catalyzes carboxymethyl transfer from carboxy-S-adenosyl-L-methionine (Cx-SAM) to 5-hydroxyuridine (ho5U) to form 5-carboxymethoxyuridine (cmo5U) at position 34 in tRNAs. The protein is tRNA U34 carboxymethyltransferase of Wolinella succinogenes (strain ATCC 29543 / DSM 1740 / CCUG 13145 / JCM 31913 / LMG 7466 / NCTC 11488 / FDC 602W) (Vibrio succinogenes).